The primary structure comprises 40 residues: Photosystem II reaction center protein Y (40 aa).

Residues 5–23 (LVLVASPILLALGWAGFNI) traverse the membrane as a helical segment.

This sequence belongs to the PsbY family. As to quaternary structure, PSII is composed of 1 copy each of membrane proteins PsbA, PsbB, PsbC, PsbD, PsbE, PsbF, PsbH, PsbI, PsbJ, PsbK, PsbL, PsbM, PsbT, PsbX, PsbY, PsbZ, Psb30/Ycf12, peripheral proteins PsbO, CyanoQ (PsbQ), PsbU, PsbV and a large number of cofactors. It forms dimeric complexes.

It localises to the cellular thylakoid membrane. In terms of biological role, loosely associated component of the core of photosystem II (PSII), it is not always seen in crystals. PSII is a light-driven water plastoquinone oxidoreductase, using light energy to abstract electrons from H(2)O, generating a proton gradient subsequently used for ATP formation. This is Photosystem II reaction center protein Y from Synechococcus sp. (strain WH7803).